A 463-amino-acid polypeptide reads, in one-letter code: L-seryl-tRNA(Sec) selenium transferase (463 aa).

Lys-295 carries the N6-(pyridoxal phosphate)lysine modification.

Belongs to the SelA family. As to quaternary structure, homodecamer; pentamer of dimers. Binds only one seryl-tRNA(Sec) per dimer. The cofactor is pyridoxal 5'-phosphate.

The protein resides in the cytoplasm. It catalyses the reaction L-seryl-tRNA(Sec) + selenophosphate + H(+) = L-selenocysteinyl-tRNA(Sec) + phosphate. It functions in the pathway aminoacyl-tRNA biosynthesis; selenocysteinyl-tRNA(Sec) biosynthesis; selenocysteinyl-tRNA(Sec) from L-seryl-tRNA(Sec) (bacterial route): step 1/1. Functionally, converts seryl-tRNA(Sec) to selenocysteinyl-tRNA(Sec) required for selenoprotein biosynthesis. The polypeptide is L-seryl-tRNA(Sec) selenium transferase (Salmonella enteritidis PT4 (strain P125109)).